A 297-amino-acid polypeptide reads, in one-letter code: tRNA uridine(34) hydroxylase (297 aa).

A Rhodanese domain is found at 133–228; sequence RGEEVVFFDG…YGETFKDQGL (96 aa). The active-site Cysteine persulfide intermediate is Cys-188.

It belongs to the TrhO family.

It catalyses the reaction uridine(34) in tRNA + AH2 + O2 = 5-hydroxyuridine(34) in tRNA + A + H2O. In terms of biological role, catalyzes oxygen-dependent 5-hydroxyuridine (ho5U) modification at position 34 in tRNAs. This Arthrobacter sp. (strain FB24) protein is tRNA uridine(34) hydroxylase.